A 461-amino-acid polypeptide reads, in one-letter code: Argininosuccinate lyase (461 aa).

Belongs to the lyase 1 family. Argininosuccinate lyase subfamily.

Its subcellular location is the cytoplasm. The enzyme catalyses 2-(N(omega)-L-arginino)succinate = fumarate + L-arginine. Its pathway is amino-acid biosynthesis; L-arginine biosynthesis; L-arginine from L-ornithine and carbamoyl phosphate: step 3/3. This chain is Argininosuccinate lyase, found in Desulfitobacterium hafniense (strain DSM 10664 / DCB-2).